Here is an 88-residue protein sequence, read N- to C-terminus: Cell division topological specificity factor (88 aa).

It belongs to the MinE family.

Prevents the cell division inhibition by proteins MinC and MinD at internal division sites while permitting inhibition at polar sites. This ensures cell division at the proper site by restricting the formation of a division septum at the midpoint of the long axis of the cell. The chain is Cell division topological specificity factor from Clostridium kluyveri (strain ATCC 8527 / DSM 555 / NBRC 12016 / NCIMB 10680 / K1).